We begin with the raw amino-acid sequence, 797 residues long: Kinesin-like protein KIF18B (797 aa).

Residues 11–352 enclose the Kinesin motor domain; it reads TVAVVVRVRP…LKYANRAKEI (342 aa). 110-117 serves as a coordination point for ATP; that stretch reads GATGAGKT. The stretch at 367 to 402 forms a coiled coil; sequence ISKYATICEQLKTEVADLQAKLRAYEDAARDAGKQI. 4 disordered regions span residues 412–476, 528–564, 579–640, and 730–797; these read EEAV…PNRL, AAVSPQPTDTSGAPPALRTQRGCDASPSTLSAEPSVP, LSSP…KEPQ, and KGSS…SGPR. A compositionally biased stretch (polar residues) spans 594-608; the sequence is MSNTSRLETPHSLNT. The span at 731–744 shows a compositional bias: low complexity; that stretch reads GSSIPKPSSISKGS.

This sequence belongs to the TRAFAC class myosin-kinesin ATPase superfamily. Kinesin family.

It is found in the nucleus. It localises to the cytoplasm. Its subcellular location is the cytoskeleton. May play an important role in microtubule plus-end depolymerizing activity in mitotic cells. This is Kinesin-like protein KIF18B (KIF18B) from Gallus gallus (Chicken).